Here is a 150-residue protein sequence, read N- to C-terminus: Large ribosomal subunit protein bL9 (150 aa).

It belongs to the bacterial ribosomal protein bL9 family.

In terms of biological role, binds to the 23S rRNA. The polypeptide is Large ribosomal subunit protein bL9 (Polynucleobacter asymbioticus (strain DSM 18221 / CIP 109841 / QLW-P1DMWA-1) (Polynucleobacter necessarius subsp. asymbioticus)).